Here is a 155-residue protein sequence, read N- to C-terminus: Probable jacalin-related lectin 26 (155 aa).

2 helical membrane-spanning segments follow: residues 26 to 48 (AYLY…IAMI) and 127 to 149 (VSFV…VLFL). Residues 47–155 (MIRAGSVGKK…VLFLMKFKRS (109 aa)) form the Jacalin-type lectin domain.

The protein belongs to the jacalin lectin family.

The protein localises to the membrane. In Arabidopsis thaliana (Mouse-ear cress), this protein is Probable jacalin-related lectin 26 (JAL26).